We begin with the raw amino-acid sequence, 174 residues long: ATP synthase subunit b (174 aa).

The helical transmembrane segment at 15–33 (NPGLVIWTLVTFSVVVFVL) threads the bilayer.

This sequence belongs to the ATPase B chain family. F-type ATPases have 2 components, F(1) - the catalytic core - and F(0) - the membrane proton channel. F(1) has five subunits: alpha(3), beta(3), gamma(1), delta(1), epsilon(1). F(0) has three main subunits: a(1), b(2) and c(10-14). The alpha and beta chains form an alternating ring which encloses part of the gamma chain. F(1) is attached to F(0) by a central stalk formed by the gamma and epsilon chains, while a peripheral stalk is formed by the delta and b chains.

The protein localises to the cell inner membrane. Functionally, f(1)F(0) ATP synthase produces ATP from ADP in the presence of a proton or sodium gradient. F-type ATPases consist of two structural domains, F(1) containing the extramembraneous catalytic core and F(0) containing the membrane proton channel, linked together by a central stalk and a peripheral stalk. During catalysis, ATP synthesis in the catalytic domain of F(1) is coupled via a rotary mechanism of the central stalk subunits to proton translocation. Component of the F(0) channel, it forms part of the peripheral stalk, linking F(1) to F(0). The chain is ATP synthase subunit b from Leptospira biflexa serovar Patoc (strain Patoc 1 / Ames).